A 255-amino-acid chain; its full sequence is Ribonuclease HII (255 aa).

In terms of domain architecture, RNase H type-2 spans 72–255; that stretch reads AIICGIDEVG…KSFEPIKSLL (184 aa). Residues D78, E79, and D170 each coordinate a divalent metal cation.

The protein belongs to the RNase HII family. Mn(2+) serves as cofactor. Requires Mg(2+) as cofactor.

Its subcellular location is the cytoplasm. The catalysed reaction is Endonucleolytic cleavage to 5'-phosphomonoester.. Functionally, endonuclease that specifically degrades the RNA of RNA-DNA hybrids. This Staphylococcus aureus (strain Mu3 / ATCC 700698) protein is Ribonuclease HII.